Reading from the N-terminus, the 184-residue chain is MCVAPTPSHLVWVDCEMTGLNPERDELLEVAVVVTDKDLLPLDEGVNVVVSPSSEALGAMDNYVARMHRVSGLLDELSNGVPVSEAQAMVKEYITKHVKTGGIMSGNSIATDRLFITRYMPDVHAILHYRMIDVSSIKELAVRWAPEIYSGAPNKKGGHRAMADVLESIAELAYYREHFLTGTA.

The 163-residue stretch at Leu-10–Leu-172 folds into the Exonuclease domain. The active site involves Tyr-129.

It belongs to the oligoribonuclease family.

The protein localises to the cytoplasm. 3'-to-5' exoribonuclease specific for small oligoribonucleotides. The protein is Oligoribonuclease of Tropheryma whipplei (strain Twist) (Whipple's bacillus).